Here is a 310-residue protein sequence, read N- to C-terminus: Ribose-phosphate pyrophosphokinase (310 aa).

ATP contacts are provided by residues 33–35 and 92–93; these read DGE and RQ. 2 residues coordinate Mg(2+): H127 and D166. K189 is an active-site residue. Residues R191, D215, and 219-223 contribute to the D-ribose 5-phosphate site; that span reads DTAGT.

This sequence belongs to the ribose-phosphate pyrophosphokinase family. Class I subfamily. In terms of assembly, homohexamer. The cofactor is Mg(2+).

The protein localises to the cytoplasm. It catalyses the reaction D-ribose 5-phosphate + ATP = 5-phospho-alpha-D-ribose 1-diphosphate + AMP + H(+). Its pathway is metabolic intermediate biosynthesis; 5-phospho-alpha-D-ribose 1-diphosphate biosynthesis; 5-phospho-alpha-D-ribose 1-diphosphate from D-ribose 5-phosphate (route I): step 1/1. Its function is as follows. Involved in the biosynthesis of the central metabolite phospho-alpha-D-ribosyl-1-pyrophosphate (PRPP) via the transfer of pyrophosphoryl group from ATP to 1-hydroxyl of ribose-5-phosphate (Rib-5-P). The chain is Ribose-phosphate pyrophosphokinase from Bordetella parapertussis (strain 12822 / ATCC BAA-587 / NCTC 13253).